A 771-amino-acid polypeptide reads, in one-letter code: Choline transporter-like protein 1 (771 aa).

Residues 96-116 (FLFFVFLCGWVVVAGFGIMWG) form a helical membrane-spanning segment. N141 and N259 each carry an N-linked (GlcNAc...) asparagine glycan. A run of 4 helical transmembrane segments spans residues 312-332 (WWQT…WTVI), 335-355 (LLGS…LGFG), 392-412 (LVVA…ILFI), and 441-461 (LFPF…AIWL). Residue N480 is glycosylated (N-linked (GlcNAc...) asparagine). 5 helical membrane-spanning segments follow: residues 514-534 (LFAF…ALAG), 566-586 (LGSI…RVLL), 603-623 (WFLM…KFLT), 662-682 (AGIL…ILSF), and 701-721 (YYFV…DLFF).

The protein belongs to the CTL (choline transporter-like) family.

The protein localises to the membrane. The polypeptide is Choline transporter-like protein 1 (chtl-1) (Caenorhabditis elegans).